Here is a 701-residue protein sequence, read N- to C-terminus: Polyribonucleotide nucleotidyltransferase (701 aa).

Positions 487 and 493 each coordinate Mg(2+). The 60-residue stretch at 554-613 (PTMLQMKIDSDKIRDVIGKGGATIRAICEETKASIDIEDDGSVKIYGETKEAAEAAKQRV) folds into the KH domain. The region spanning 623–691 (GKIYVGKVER…NRGRIKLSIK (69 aa)) is the S1 motif domain.

The protein belongs to the polyribonucleotide nucleotidyltransferase family. As to quaternary structure, component of the RNA degradosome, which is a multiprotein complex involved in RNA processing and mRNA degradation. It depends on Mg(2+) as a cofactor.

It localises to the cytoplasm. The catalysed reaction is RNA(n+1) + phosphate = RNA(n) + a ribonucleoside 5'-diphosphate. Its function is as follows. Involved in mRNA degradation. Catalyzes the phosphorolysis of single-stranded polyribonucleotides processively in the 3'- to 5'-direction. The polypeptide is Polyribonucleotide nucleotidyltransferase (Pseudomonas paraeruginosa (strain DSM 24068 / PA7) (Pseudomonas aeruginosa (strain PA7))).